Reading from the N-terminus, the 1071-residue chain is MPRDGNEGMFTIPGFSQIQFEGFCRFIDQGLMEEFHKFPKIEDTDQEIEFQLFVERYQLVEPLIKERDAVYESLTYSSELYVPAGLIWKTGRDMQEQTIFIGNIPLMNSLGTFIVNGIYRIVINQILQSPGIYYRSELDHNGISVYTSTIISDWGGRSELEIDRKSRIWARVSRKQKISILVLSSAMGSNLREILDNVCYPEIFLSFLNDREKKKIGSKENAILEFYQQFACVGGDPVFSESLCKELQKKFFQQRCELGRIGRRNMNRRLNLDIPQSNTFLLPRDVLAAADHLIGMKFGMGTLDDMNHLKNKRIRSVADLLQDQFGLALVRLENAVRGTICGAIRHKLILTPQNLVSSTSLTTTYESFFGLHPLSQVLDRTNPLTQIVHGRKLSYLGPGGLTGRTASFRIRDIHPSHYGRICPIDTSEGINVGLIGSLAIHARIGHWGSIESPFYEVYQRSKETKMVFLSPSRDEYYTVATGNSLALNRGGIQEEQIVPARYRQEFLTIAWEQIHLRSIFPFQYFSIGASLIPFIEHNDANRALMSSNMQRQAVPLSRSEKCIVGTGLERQAALDSGVSAIAECEGKIIYTDTHKIVLSGHGDTISIPLVMYQRSNKNTCMHQNPQVRRGKCIKKGQILADGAATVGGELALGKNVLVAYMPWEGYNFEDAVLISERLVYEDIYTSFHIRKYEIQTHVTSQGPERITHEIPHLEAHLLRNLDRNGIVALGSWVETGDILVGKLTPQTANESSYAPEDRLLRAILGIQVSTAKETCLKLPIGGRGRVIDVRWIQKKGGSSYNPETIRVYISQKREIKVGDKVAGRHGNKGIISKILSRQDMPYLQDGTPVDMVFNPLGVPSRMNVGQIFECSLGLAGDLLDRHYRIAPFDERYEQEASRKLVFSELYEASKQTANPWVFEPEYPGKSRIFDGRTGDPFEQPVLIGKSYILKLIHQVDDKIHGRSSGHYALVTQQPLRGRAKQGGQRVGEMEVWALEGFGVAHILQEMLTYKSDHIRARQEVLGTTIIGGTIPTPEDAPESFRLLVRELRSLALELNHFLVSEKNFQINRKEA.

It belongs to the RNA polymerase beta chain family. In terms of assembly, in plastids the minimal PEP RNA polymerase catalytic core is composed of four subunits: alpha, beta, beta', and beta''. When a (nuclear-encoded) sigma factor is associated with the core the holoenzyme is formed, which can initiate transcription.

It is found in the plastid. Its subcellular location is the chloroplast. It carries out the reaction RNA(n) + a ribonucleoside 5'-triphosphate = RNA(n+1) + diphosphate. DNA-dependent RNA polymerase catalyzes the transcription of DNA into RNA using the four ribonucleoside triphosphates as substrates. The polypeptide is DNA-directed RNA polymerase subunit beta (Acorus calamus (Sweet flag)).